The chain runs to 167 residues: Crossover junction endodeoxyribonuclease RuvC (167 aa).

Residues D14, E75, and D147 contribute to the active site. Mg(2+) contacts are provided by D14, E75, and D147.

This sequence belongs to the RuvC family. Homodimer which binds Holliday junction (HJ) DNA. The HJ becomes 2-fold symmetrical on binding to RuvC with unstacked arms; it has a different conformation from HJ DNA in complex with RuvA. In the full resolvosome a probable DNA-RuvA(4)-RuvB(12)-RuvC(2) complex forms which resolves the HJ. Mg(2+) serves as cofactor.

It is found in the cytoplasm. It carries out the reaction Endonucleolytic cleavage at a junction such as a reciprocal single-stranded crossover between two homologous DNA duplexes (Holliday junction).. Functionally, the RuvA-RuvB-RuvC complex processes Holliday junction (HJ) DNA during genetic recombination and DNA repair. Endonuclease that resolves HJ intermediates. Cleaves cruciform DNA by making single-stranded nicks across the HJ at symmetrical positions within the homologous arms, yielding a 5'-phosphate and a 3'-hydroxyl group; requires a central core of homology in the junction. The consensus cleavage sequence is 5'-(A/T)TT(C/G)-3'. Cleavage occurs on the 3'-side of the TT dinucleotide at the point of strand exchange. HJ branch migration catalyzed by RuvA-RuvB allows RuvC to scan DNA until it finds its consensus sequence, where it cleaves and resolves the cruciform DNA. The chain is Crossover junction endodeoxyribonuclease RuvC from Synechocystis sp. (strain ATCC 27184 / PCC 6803 / Kazusa).